The chain runs to 170 residues: MQKGMTLVELLIGLAIISIALNFAVPLWKTDSPKTILAKEQHRLYLFLRQIQARAENSSEVWFLLINRNLATQQWCLTAQVKNNQTCDCLNPINCPKEVYAHFYYPYFPNKTMIQSHHIYPKEITRFDGIRNTIVTRCFILQAENERTLFLFFNVGSIRVKTNQFDSACN.

Residues 7–27 traverse the membrane as a helical segment; it reads LVELLIGLAIISIALNFAVPL.

It is found in the membrane. This is an uncharacterized protein from Haemophilus influenzae (strain ATCC 51907 / DSM 11121 / KW20 / Rd).